Here is a 495-residue protein sequence, read N- to C-terminus: Protein YhjJ (495 aa).

The signal sequence occupies residues 1 to 24; that stretch reads MQGTKIRLLAGSLLMLASAGYVQA.

This sequence belongs to the peptidase M16 family.

Its subcellular location is the periplasm. This chain is Protein YhjJ (yhjJ), found in Salmonella typhi.